Reading from the N-terminus, the 87-residue chain is Small ribosomal subunit protein bS20 (87 aa).

The segment covering 1–11 (MANIKSAKKRA) has biased composition (basic residues). The segment at 1-26 (MANIKSAKKRAVQSEKRRQHNASQRS) is disordered.

It belongs to the bacterial ribosomal protein bS20 family.

In terms of biological role, binds directly to 16S ribosomal RNA. The sequence is that of Small ribosomal subunit protein bS20 from Actinobacillus pleuropneumoniae serotype 5b (strain L20).